Consider the following 173-residue polypeptide: MPTGKRKGDVESTKFDLVLRPETITFENFRIGWFYTEARLVIKNPTKNRYTYKIKVTNNDMFDIRTPKGFIDPETSIEIELLHVPGILLPRNDVHHFSVYYIKCDTEAQNSHSIWTSKKSEGCKHVLIRFPNKIIRTQEMKKMEEDDMKQQKERNKLSNEKMGIRNQNMGEKK.

The region spanning 16–133 is the MSP domain; it reads DLVLRPETIT…KHVLIRFPNK (118 aa). Residues 141-163 show a composition bias toward basic and acidic residues; it reads KKMEEDDMKQQKERNKLSNEKMG. A disordered region spans residues 141–173; that stretch reads KKMEEDDMKQQKERNKLSNEKMGIRNQNMGEKK.

This is an uncharacterized protein from Caenorhabditis elegans.